The chain runs to 242 residues: 3-deoxy-manno-octulosonate cytidylyltransferase (242 aa).

This sequence belongs to the KdsB family.

It localises to the cytoplasm. It catalyses the reaction 3-deoxy-alpha-D-manno-oct-2-ulosonate + CTP = CMP-3-deoxy-beta-D-manno-octulosonate + diphosphate. The protein operates within nucleotide-sugar biosynthesis; CMP-3-deoxy-D-manno-octulosonate biosynthesis; CMP-3-deoxy-D-manno-octulosonate from 3-deoxy-D-manno-octulosonate and CTP: step 1/1. It functions in the pathway bacterial outer membrane biogenesis; lipopolysaccharide biosynthesis. Activates KDO (a required 8-carbon sugar) for incorporation into bacterial lipopolysaccharide in Gram-negative bacteria. The protein is 3-deoxy-manno-octulosonate cytidylyltransferase of Mesorhizobium japonicum (strain LMG 29417 / CECT 9101 / MAFF 303099) (Mesorhizobium loti (strain MAFF 303099)).